A 48-amino-acid polypeptide reads, in one-letter code: MAKKVGLACDICGARDYTTMKKEDVSIRLELKKFCRRCNAHTIHKEAK.

It belongs to the bacterial ribosomal protein bL33 family.

The protein is Large ribosomal subunit protein bL33A of Exiguobacterium sibiricum (strain DSM 17290 / CCUG 55495 / CIP 109462 / JCM 13490 / 255-15).